An 820-amino-acid chain; its full sequence is Nuclear pore complex protein Nup93 (820 aa).

The protein belongs to the nucleoporin interacting component (NIC) family.

The protein localises to the nucleus membrane. It is found in the nucleus. Its subcellular location is the nuclear pore complex. Its function is as follows. Plays a role in the nuclear pore complex (NPC) assembly and/or maintenance. The protein is Nuclear pore complex protein Nup93 (dye) of Danio rerio (Zebrafish).